Here is a 520-residue protein sequence, read N- to C-terminus: Probable E3 ubiquitin-protein ligase rbrA (520 aa).

Residues 1–42 (MTDDEMYEDYDVDDDSAEESGNESLDDTEYDDAATQEFDFDE) show a composition bias toward acidic residues. Positions 1–51 (MTDDEMYEDYDVDDDSAEESGNESLDDTEYDDAATQEFDFDENQPQRSLGK) are disordered. The segment at 135 to 354 (GNVSCLICLE…GGYYNCNKYD (220 aa)) is TRIAD supradomain. Positions 139, 142, 156, 158, 161, 164, 184, 189, 228, 233, 250, 252, 257, 260, 268, 273, 300, and 303 each coordinate Zn(2+). The RING-type 1 zinc-finger motif lies at 139-189 (CLICLEDYPPTQTFALICNHRYCLPCYKNYLEIKVSEGPECIYTPCPAPKC). The IBR-type zinc finger occupies 208 to 273 (ERFNNFILKS…EIGDHMPCPC (66 aa)). Residues 300–333 (CPECRSPIEKNGGCMHMTCRKNAGGCGFEFCWLC) form an RING-type 2; atypical zinc finger. The active site involves cysteine 313. Positions 318, 325, 330, 333, 340, and 350 each coordinate Zn(2+).

The protein belongs to the RBR family.

It carries out the reaction [E2 ubiquitin-conjugating enzyme]-S-ubiquitinyl-L-cysteine + [acceptor protein]-L-lysine = [E2 ubiquitin-conjugating enzyme]-L-cysteine + [acceptor protein]-N(6)-ubiquitinyl-L-lysine.. It functions in the pathway protein modification; protein ubiquitination. Might act as an E3 ubiquitin-protein ligase. Appears to be required for normal cell-type proportioning and cell sorting during multicellular development. In addition to being necessary for a normal percentage of prestalk cells and the organization of the slug, rbrA is also necessary for spore cell viability. The protein is Probable E3 ubiquitin-protein ligase rbrA (rbrA) of Dictyostelium discoideum (Social amoeba).